The primary structure comprises 492 residues: UDP-glucosyl transferase 73DL1 (492 aa).

His27 functions as the Proton acceptor in the catalytic mechanism. Asp131 functions as the Charge relay in the catalytic mechanism. Residues Trp352, Val353, His370, Thr375, Glu378, and Tyr392 each coordinate UDP.

This sequence belongs to the UDP-glycosyltransferase family. Mainly expressed in flowers, flower buds and young leaves, and, to a lesser extent, in old leaves, stems and roots.

It participates in secondary metabolite biosynthesis; terpenoid biosynthesis. Component of the oleanane-type triterpene saponins (e.g. saponarioside A and saponarioside B) biosynthetic pathway, leading to the production of natural products with detergent properties used as traditional sources of soap. A glycosyltransferase that mediates the conversion of QA-mono to QA-di via the elongation of the C-3 sugar chain with a D-galactose. This is UDP-glucosyl transferase 73DL1 from Saponaria officinalis (Common soapwort).